Consider the following 363-residue polypeptide: D-xylulose reductase (363 aa).

The Zn(2+) site is built by cysteine 41, histidine 66, and glutamate 159. Residue 183-188 participates in NAD(+) binding; that stretch reads GAGPVG.

It belongs to the zinc-containing alcohol dehydrogenase family. Zn(2+) is required as a cofactor.

The enzyme catalyses xylitol + NAD(+) = D-xylulose + NADH + H(+). It participates in carbohydrate degradation; L-arabinose degradation via L-arabinitol; D-xylulose 5-phosphate from L-arabinose (fungal route): step 4/5. The protein is D-xylulose reductase (XYL2) of Scheffersomyces stipitis (strain ATCC 58785 / CBS 6054 / NBRC 10063 / NRRL Y-11545) (Yeast).